We begin with the raw amino-acid sequence, 173 residues long: ATP-dependent protease subunit HslV (173 aa).

Threonine 2 is an active-site residue. Residues glycine 158, aspartate 161, and serine 164 each contribute to the Na(+) site.

The protein belongs to the peptidase T1B family. HslV subfamily. In terms of assembly, a double ring-shaped homohexamer of HslV is capped on each side by a ring-shaped HslU homohexamer. The assembly of the HslU/HslV complex is dependent on binding of ATP.

It is found in the cytoplasm. It carries out the reaction ATP-dependent cleavage of peptide bonds with broad specificity.. Allosterically activated by HslU binding. Its function is as follows. Protease subunit of a proteasome-like degradation complex believed to be a general protein degrading machinery. This Glaesserella parasuis serovar 5 (strain SH0165) (Haemophilus parasuis) protein is ATP-dependent protease subunit HslV.